The primary structure comprises 457 residues: Adenylosuccinate synthetase isozyme 1 (457 aa).

The segment at 1–21 is disordered; it reads MSGTRASNDRPPGAGGVKRGR. GTP contacts are provided by residues 42 to 48 and 70 to 72; these read GDEGKGK and GHT. The active-site Proton acceptor is the Asp-43. Mg(2+) contacts are provided by Asp-43 and Gly-70. Asp-43 is a binding site for substrate. IMP contacts are provided by residues 43-46, 68-71, Thr-163, Arg-177, Asn-256, Thr-271, and Arg-335; these read DEGK and NAGH. His-71 serves as the catalytic Proton donor. 331 to 337 contacts substrate; the sequence is VTTGRKR. Residues Arg-337, 363–365, and 445–448 each bind GTP; these read KLD and GVGK.

Belongs to the adenylosuccinate synthetase family. Homodimer. Mg(2+) is required as a cofactor. Predominantly expressed in skeletal muscle and heart, as well as in several hematopoietic cell lines and solid tumors.

The protein localises to the cytoplasm. It carries out the reaction IMP + L-aspartate + GTP = N(6)-(1,2-dicarboxyethyl)-AMP + GDP + phosphate + 2 H(+). It functions in the pathway purine metabolism; AMP biosynthesis via de novo pathway; AMP from IMP: step 1/2. In terms of biological role, component of the purine nucleotide cycle (PNC), which interconverts IMP and AMP to regulate the nucleotide levels in various tissues, and which contributes to glycolysis and ammoniagenesis. Catalyzes the first committed step in the biosynthesis of AMP from IMP. The protein is Adenylosuccinate synthetase isozyme 1 of Homo sapiens (Human).